The sequence spans 215 residues: Adenylate kinase (215 aa).

10-15 contacts ATP; that stretch reads GAGKGT. An NMP region spans residues 30-59; that stretch reads STGDMLRAAVKAGTELGLKAKSVMDSGGLV. Residues threonine 31, arginine 36, 57 to 59, 85 to 88, and glutamine 92 contribute to the AMP site; these read GLV and GFPR. The tract at residues 122–159 is LID; that stretch reads GRRVHEASGRVYHTVYNPPKIAGKDDITGEDLVQRKDD. ATP contacts are provided by residues arginine 123 and 132 to 133; that span reads VY. Positions 156 and 167 each coordinate AMP. Residue glycine 201 participates in ATP binding.

Belongs to the adenylate kinase family. In terms of assembly, monomer.

The protein localises to the cytoplasm. The enzyme catalyses AMP + ATP = 2 ADP. The protein operates within purine metabolism; AMP biosynthesis via salvage pathway; AMP from ADP: step 1/1. In terms of biological role, catalyzes the reversible transfer of the terminal phosphate group between ATP and AMP. Plays an important role in cellular energy homeostasis and in adenine nucleotide metabolism. This Pseudomonas fluorescens (strain ATCC BAA-477 / NRRL B-23932 / Pf-5) protein is Adenylate kinase.